Consider the following 283-residue polypeptide: Release factor glutamine methyltransferase (283 aa).

S-adenosyl-L-methionine is bound by residues Asp143 and Asn189. Residue 189–192 coordinates substrate; that stretch reads NPPY.

It belongs to the protein N5-glutamine methyltransferase family. PrmC subfamily.

It catalyses the reaction L-glutaminyl-[peptide chain release factor] + S-adenosyl-L-methionine = N(5)-methyl-L-glutaminyl-[peptide chain release factor] + S-adenosyl-L-homocysteine + H(+). Its function is as follows. Methylates the class 1 translation termination release factors RF1/PrfA and RF2/PrfB on the glutamine residue of the universally conserved GGQ motif. This chain is Release factor glutamine methyltransferase, found in Clostridium botulinum (strain Hall / ATCC 3502 / NCTC 13319 / Type A).